The primary structure comprises 486 residues: Cardiolipin synthase A (486 aa).

A run of 2 helical transmembrane segments spans residues 3 to 23 (TFYTVVSWLVILGYWVLIAGV) and 38 to 58 (MAWLLIIYILPLVGIIAYLSV). PLD phosphodiesterase domains lie at 219-246 (MDLRQHRKMVMIDNYIAYTGSMNMVDPR) and 399-426 (EGGLLHTKSVLVDGELSLVGTVNLDMRS). Residues His-224, Lys-226, Asp-231, His-404, Lys-406, and Asp-411 contribute to the active site.

The protein belongs to the phospholipase D family. Cardiolipin synthase subfamily. ClsA sub-subfamily.

The protein localises to the cell inner membrane. It catalyses the reaction 2 a 1,2-diacyl-sn-glycero-3-phospho-(1'-sn-glycerol) = a cardiolipin + glycerol. Functionally, catalyzes the reversible phosphatidyl group transfer from one phosphatidylglycerol molecule to another to form cardiolipin (CL) (diphosphatidylglycerol) and glycerol. This Salmonella arizonae (strain ATCC BAA-731 / CDC346-86 / RSK2980) protein is Cardiolipin synthase A.